The chain runs to 404 residues: HAGGKFDGGGYKVSGGLHGVGASVVNALSTELEVFVHREGKIHYQKYERGIPVADLKVIGDTDQTGTITRFKPDPEIFQETTVYDFDTLATRMRELAFLNRNIKLTIEDKRERKQKKEFHYEGGIKSYVEHLNRSKQPIHEEPVYVEGSKDGIQVEVSLQYNEGYTNNIYSFTNNIHTYEGGTHEVGFKTALTRVINDYGRKNSILKDADSNLTGEDVREGLTAIVSIKHPNPQFEGQTKTKLGNSEARTITESVFSEAFEKFLLENPNVARKIVEKGTMAARARVAAKKARELTRRKSALEVSSLPGKLADCSSKDPAISEIYIVEGDSAGGSAKQGRDRHFQAILPLKGKIINVEKARLDKILSNDEVRTIITAIGTNIGGDFDIEKARYHKVIIMTDADVD.

A Toprim domain is found at 321-404; it reads SEIYIVEGDS…VIIMTDADVD (84 aa). Mg(2+) is bound by residues Glu327, Asp400, and Asp402.

The protein belongs to the type II topoisomerase GyrB family. Heterotetramer, composed of two GyrA and two GyrB chains. In the heterotetramer, GyrA contains the active site tyrosine that forms a transient covalent intermediate with DNA, while GyrB binds cofactors and catalyzes ATP hydrolysis. Requires Mg(2+) as cofactor. Mn(2+) is required as a cofactor. It depends on Ca(2+) as a cofactor.

It localises to the cytoplasm. The enzyme catalyses ATP-dependent breakage, passage and rejoining of double-stranded DNA.. Its function is as follows. A type II topoisomerase that negatively supercoils closed circular double-stranded (ds) DNA in an ATP-dependent manner to modulate DNA topology and maintain chromosomes in an underwound state. Negative supercoiling favors strand separation, and DNA replication, transcription, recombination and repair, all of which involve strand separation. Also able to catalyze the interconversion of other topological isomers of dsDNA rings, including catenanes and knotted rings. Type II topoisomerases break and join 2 DNA strands simultaneously in an ATP-dependent manner. The sequence is that of DNA gyrase subunit B (gyrB) from Bacillus cereus.